The chain runs to 484 residues: Glutamyl-tRNA(Gln) amidotransferase subunit A (484 aa).

Active-site charge relay system residues include lysine 78 and serine 153. Residue serine 177 is the Acyl-ester intermediate of the active site.

This sequence belongs to the amidase family. GatA subfamily. As to quaternary structure, heterotrimer of A, B and C subunits.

It catalyses the reaction L-glutamyl-tRNA(Gln) + L-glutamine + ATP + H2O = L-glutaminyl-tRNA(Gln) + L-glutamate + ADP + phosphate + H(+). Functionally, allows the formation of correctly charged Gln-tRNA(Gln) through the transamidation of misacylated Glu-tRNA(Gln) in organisms which lack glutaminyl-tRNA synthetase. The reaction takes place in the presence of glutamine and ATP through an activated gamma-phospho-Glu-tRNA(Gln). The polypeptide is Glutamyl-tRNA(Gln) amidotransferase subunit A (Thermodesulfovibrio yellowstonii (strain ATCC 51303 / DSM 11347 / YP87)).